A 386-amino-acid chain; its full sequence is Succinate--CoA ligase [ADP-forming] subunit beta (386 aa).

Positions 9–244 (KELLRKYGVV…FDEEDADEIE (236 aa)) constitute an ATP-grasp domain. ATP is bound by residues Lys46, 53–55 (GRG), Glu99, Ala102, and Glu107. The Mg(2+) site is built by Asn199 and Asp213. Substrate is bound by residues Asn264 and 321–323 (GIM).

The protein belongs to the succinate/malate CoA ligase beta subunit family. As to quaternary structure, heterotetramer of two alpha and two beta subunits. Mg(2+) serves as cofactor.

The enzyme catalyses succinate + ATP + CoA = succinyl-CoA + ADP + phosphate. It carries out the reaction GTP + succinate + CoA = succinyl-CoA + GDP + phosphate. It functions in the pathway carbohydrate metabolism; tricarboxylic acid cycle; succinate from succinyl-CoA (ligase route): step 1/1. Functionally, succinyl-CoA synthetase functions in the citric acid cycle (TCA), coupling the hydrolysis of succinyl-CoA to the synthesis of either ATP or GTP and thus represents the only step of substrate-level phosphorylation in the TCA. The beta subunit provides nucleotide specificity of the enzyme and binds the substrate succinate, while the binding sites for coenzyme A and phosphate are found in the alpha subunit. The chain is Succinate--CoA ligase [ADP-forming] subunit beta from Aromatoleum aromaticum (strain DSM 19018 / LMG 30748 / EbN1) (Azoarcus sp. (strain EbN1)).